The sequence spans 273 residues: DnaJ homolog subfamily C member 27 (273 aa).

GTP is bound by residues 23 to 30 (GNAEVGKS), 71 to 75 (DMAGH), and 134 to 137 (NKID). Residues 217–273 (DSWDMLGVKPGATRDEVNKAYRKLAVLLHPDKCVAPGSEDAFKAVVNARTALLKNIK) enclose the J domain.

Belongs to the small GTPase superfamily. Rab family.

It is found in the nucleus. Its function is as follows. GTPase possibly involved in regulation of the MEK/ERK pathway. The chain is DnaJ homolog subfamily C member 27 (DNAJC27) from Gallus gallus (Chicken).